The chain runs to 66 residues: Beta-toxin Cb3 (66 aa).

One can recognise an LCN-type CS-alpha/beta domain in the interval 1–66 (KEGYIVNYYD…VWPLPNKTCL (66 aa)). Cystine bridges form between C12–C65, C16–C41, C25–C46, and C29–C48.

The protein belongs to the long (4 C-C) scorpion toxin superfamily. Sodium channel inhibitor family. Beta subfamily. Expressed by the venom gland.

The protein localises to the secreted. Functionally, beta toxins bind voltage-independently at site-4 of sodium channels (Nav) and reduces peak current and shifts the voltage of activation toward more negative potentials thereby affecting sodium channel activation and promoting spontaneous and repetitive firing. Has an inhibitory effect on voltage-gated sodium channels hNav1.1/SCN1A, hNav1.2/SCN2A, hNav1.4/SCN4A and hNav1.6/SCN8A. Reduces the peak current of hNav1.5/SCN5A but does not shift its voltage of activation. Also affects the inactivation processes of hNav1.1/SCN1A, hNav1.4/SCN4A, hNav1.5/SCN5A and hNav1.6/SCN8A. This toxin is active against mammals and lethal to mice. The protein is Beta-toxin Cb3 of Centruroides baergi (Scorpion).